Here is a 448-residue protein sequence, read N- to C-terminus: Argininosuccinate synthase (448 aa).

ATP is bound by residues 17–25 and Ala-43; that span reads AFSGGLDTS. Residue Tyr-99 participates in L-citrulline binding. Gly-129 and Thr-131 together coordinate ATP. Residues Thr-131, Asn-135, and Asp-136 each contribute to the L-aspartate site. Asn-135 is an L-citrulline binding site. An ATP-binding site is contributed by Asp-136. Residues Arg-139 and Ser-192 each contribute to the L-citrulline site. Asp-194 is an ATP binding site. Residues Thr-201, Glu-203, and Glu-280 each coordinate L-citrulline.

It belongs to the argininosuccinate synthase family. Type 2 subfamily. Homotetramer.

The protein localises to the cytoplasm. It catalyses the reaction L-citrulline + L-aspartate + ATP = 2-(N(omega)-L-arginino)succinate + AMP + diphosphate + H(+). It participates in amino-acid biosynthesis; L-arginine biosynthesis; L-arginine from L-ornithine and carbamoyl phosphate: step 2/3. The protein is Argininosuccinate synthase of Pectobacterium atrosepticum (strain SCRI 1043 / ATCC BAA-672) (Erwinia carotovora subsp. atroseptica).